The sequence spans 527 residues: Estrogen receptor beta (527 aa).

The tract at residues 1-145 is modulating; that stretch reads MDVKNSPSSL…SPSSKRDAHF (145 aa). A phosphoserine; by MAPK mark is found at Ser-84 and Ser-102. 2 NR C4-type zinc fingers span residues 146 to 166 and 182 to 206; these read CAVC…CEGC and CPAT…LRKC. Positions 146–211 form a DNA-binding region, nuclear receptor; it reads CAVCSDYASG…RLRKCYEVGM (66 aa). The NR LBD domain maps to 261 to 495; that stretch reads SPEQLVLTLL…DLLLEMLNAH (235 aa). The interval 505 to 527 is disordered; the sequence is TRSERNLAEDSESKEGSQKPQAQ. A compositionally biased stretch (basic and acidic residues) spans 506–521; the sequence is RSERNLAEDSESKEGS.

Belongs to the nuclear hormone receptor family. NR3 subfamily. Binds DNA as a homodimer. Can form a heterodimer with ESR1. Interacts with NCOA1, NCOA3, NCOA5 and NCOA6 coactivators, leading to a strong increase of transcription of target genes. Interacts with UBE1C and AKAP13. Interacts with DNTTIP2. Interacts with CCDC62 in the presence of estradiol/E2; this interaction seems to enhance the transcription of target genes. Interacts with DNAAF4. Interacts with PRMT2. Interacts with CCAR2 (via N-terminus) in a ligand-independent manner. Interacts with RBM39, in the presence of estradiol (E2). Interacts with STUB1/CHIP. Phosphorylation at Ser-84 and Ser-102 recruits NCOA1.

The protein resides in the nucleus. Its function is as follows. Nuclear hormone receptor. Binds estrogens with an affinity similar to that of ESR1/ER-alpha, and activates expression of reporter genes containing estrogen response elements (ERE) in an estrogen-dependent manner. This is Estrogen receptor beta (ESR2) from Ovis aries (Sheep).